Consider the following 368-residue polypeptide: MSLFGTTSGFGTSGTSMFGSATTDNHNPMKDIEVTSSPDDSIGCLSFSPPTLPGNFLIAGSWANDVRCWEVQDSGQTIPKAQQMHTGPVLDVCWSDDGSKVFTASCDKTAKMWDLSSNQAIQIAQHDAPVKTIHWIKAPNYSCVMTGSWDKTLKFWDTRSSNPMMVLQLPERYYCADVIYPMAVVATAGRGLIVYQLENQPSEFRRIESPLKHQHRCVAIFKDKQNKPTGFALGSIEGRVAIHYINPPNPAKDNFTFKCHRSNGTNTSAPQDIYAVNGIAFHPVHGTLATVGSDGRFSFWDKDARTKLKTSEQLDQPISACCFNHNGNIFAYASSYDWSKGHEFYNPQKKNYIFLRNAAEELKPRNKK.

Residues 15–34 (TSMFGSATTDNHNPMKDIEV) form a disordered region. WD repeat units follow at residues 37-79 (SPDD…QTIP), 84-114 (MHTG…KMWD), 125-157 (QHDA…KFWD), 168-206 (QLPE…EFRR), 215-255 (HRCV…KDNF), 271-301 (QDIY…SFWD), and 310-346 (TSEQ…EFYN). Thr-229 carries the phosphothreonine modification.

It belongs to the WD repeat rae1 family. As to quaternary structure, interacts with NUMA1 (via N-terminal end of the coiled-coil domain); this interaction promotes spindle formation in mitosis. Interacts with NUP98. Interacts with MYCBP2. Interacts with USP11.

It is found in the cytoplasm. The protein resides in the nucleus. Its subcellular location is the cytoskeleton. It localises to the spindle pole. Plays a role in mitotic bipolar spindle formation. Binds mRNA. May function in nucleocytoplasmic transport and in directly or indirectly attaching cytoplasmic mRNPs to the cytoskeleton. The protein is mRNA export factor (RAE1) of Macaca fascicularis (Crab-eating macaque).